The sequence spans 109 residues: Transmembrane protein 233 (109 aa).

The segment at Met-1–Asp-30 is disordered. At Met-1–Thr-41 the chain is on the cytoplasmic side. Positions Asn-21–Asp-30 are enriched in acidic residues. The segment at residues Ile-42–Met-62 is an intramembrane region (helical). Residues Ser-63 to Trp-84 are Cytoplasmic-facing. Residues Val-85 to Phe-105 form a helical membrane-spanning segment. The Extracellular portion of the chain corresponds to Thr-106 to Ala-109.

This sequence belongs to the CD225/Dispanin family. As to quaternary structure, interacts with the giant stinging tree toxin ExTxA (AC P0DQP3). Interacts with Nav1.7/SCN9A. Interacts with Nav1.1/SCN1A, Nav1.2/SCN2A, Nav1.3/SCN3A, Nav1.4/SCN4A, Nav1.5/SCN5A, and Nav1.6/SCN8A.

It is found in the cell membrane. In terms of biological role, probable accessory protein of voltage-gated sodium channels. This Homo sapiens (Human) protein is Transmembrane protein 233.